The sequence spans 967 residues: Dolichyl-phosphooligosaccharide-protein glycotransferase 1 (967 aa).

Over 1-21 (MVKTQIKEKKKDEKVTIPLPG) the chain is Cytoplasmic. Residues 22–42 (KIKTVLAFLVVLAFAAYGFYI) form a helical membrane-spanning segment. The Extracellular portion of the chain corresponds to 43–112 (RHLTAGKYFS…ISIFGYNELE (70 aa)). The short motif at 53-55 (DPD) is the DXD motif 1 element. Mn(2+) is bound at residue Asp55. Residues 113 to 133 (AFLLWPPFVGFLSVIGVYLLG) traverse the membrane as a helical segment. At 134 to 135 (RK) the chain is on the cytoplasmic side. The helical transmembrane segment at 136-156 (VLNEWAGMWGAIILSVLTANF) threads the bilayer. The Extracellular segment spans residues 157–165 (SRTFSGNAR). Mn(2+) is bound by residues Arg165 and Asp167. Positions 165-167 (RGD) match the DXD motif 2 motif. A helical membrane pass occupies residues 166–186 (GDGPFMMLFTFSAVLMLYYLT). The Cytoplasmic segment spans residues 187 to 193 (EENKNKK). A helical membrane pass occupies residues 194-214 (IIWGTLFVLLAGISTAAWNGS). Residue Pro215 is a topological domain, extracellular. Residues 216 to 236 (FGLMVLLGFASFQTIILFIFG) form a helical membrane-spanning segment. Topologically, residues 237–247 (KINELREFIKE) are cytoplasmic. A helical transmembrane segment spans residues 248-268 (YYPAYLGILAISYLLTIPGIG). Residue Lys269 is a topological domain, extracellular. The helical transmembrane segment at 270–290 (IGGFVRFAFEVFLGLVFLAIV) threads the bilayer. Over 291 to 306 (MLYGGKYLNYSDKKHR) the chain is Cytoplasmic. The chain crosses the membrane as a helical span at residues 307–327 (FAVVAVIVIAGFAGAYIYVGP). The Extracellular portion of the chain corresponds to 328–360 (KLFTLMGGAYQSTQVYETVQELAKTDWGDVKVY). The TIXE motif signature appears at 345–348 (TVQE). A helical membrane pass occupies residues 361–381 (YGVEKPNGIVFFLGLVGAMIV). Residues 382 to 396 (TARYLYKLFKDGRRP) are Cytoplasmic-facing. A helical membrane pass occupies residues 397–417 (HEELFAITFYVMSIYLLWTAA). Residue Arg418 is a topological domain, extracellular. Arg418 contacts a glycophospholipid. The helical transmembrane segment at 419–439 (FLFLASYAIALMSGVFAGYVL) threads the bilayer. At 440-453 (ETVEKMKESIPIKA) the chain is on the cytoplasmic side. The helical transmembrane segment at 454-474 (ALGGVIAIMLLLIPLTHGPLL) threads the bilayer. Topologically, residues 475–967 (AQSAKSMRTT…LEVSASAPHH (493 aa)) are extracellular. Residues 511 to 513 (WWD) are interacts with target acceptor peptide in protein substrate. The WWDYG motif signature appears at 511 to 515 (WWDYG). Tyr516 contributes to the a glycophospholipid binding site. The DK motif signature appears at 571–578 (DWAKFNAI).

Belongs to the STT3 family. Mn(2+) serves as cofactor. It depends on Mg(2+) as a cofactor.

Its subcellular location is the cell membrane. It catalyses the reaction an archaeal dolichyl phosphooligosaccharide + [protein]-L-asparagine = an archaeal dolichyl phosphate + a glycoprotein with the oligosaccharide chain attached by N-beta-D-glycosyl linkage to a protein L-asparagine.. It functions in the pathway protein modification; protein glycosylation. Its function is as follows. Oligosaccharyl transferase (OST) that catalyzes the initial transfer of a defined glycan (ManNAcXyl(2)GlcAMan(2)GalNAc in P.furiosus) from the lipid carrier dolichol-monophosphate to an asparagine residue within an Asn-X-Ser/Thr consensus motif in nascent polypeptide chains, the first step in protein N-glycosylation. This is Dolichyl-phosphooligosaccharide-protein glycotransferase 1 (aglB1) from Pyrococcus furiosus (strain ATCC 43587 / DSM 3638 / JCM 8422 / Vc1).